The following is a 363-amino-acid chain: Aminomethyltransferase (363 aa).

This sequence belongs to the GcvT family. As to quaternary structure, the glycine cleavage system is composed of four proteins: P, T, L and H.

It catalyses the reaction N(6)-[(R)-S(8)-aminomethyldihydrolipoyl]-L-lysyl-[protein] + (6S)-5,6,7,8-tetrahydrofolate = N(6)-[(R)-dihydrolipoyl]-L-lysyl-[protein] + (6R)-5,10-methylene-5,6,7,8-tetrahydrofolate + NH4(+). Functionally, the glycine cleavage system catalyzes the degradation of glycine. The sequence is that of Aminomethyltransferase from Prosthecochloris aestuarii (strain DSM 271 / SK 413).